Consider the following 268-residue polypeptide: Glutamine amidotransferase-like class 1 domain-containing protein 3, mitochondrial (268 aa).

Residues 1 to 41 constitute a mitochondrion transit peptide; the sequence is MAAVRVLVASRLAAASAFTSLSPGGRTPSQRAALHLSVPRP. Residues K151, K157, and K164 each carry the N6-acetyllysine modification. Residue K203 is modified to N6-acetyllysine; alternate. N6-succinyllysine; alternate is present on K203. K219 bears the N6-acetyllysine mark. An N6-acetyllysine; alternate mark is found at K223 and K233. K223 and K233 each carry N6-succinyllysine; alternate.

Belongs to the GATD3 family.

The protein localises to the mitochondrion. The sequence is that of Glutamine amidotransferase-like class 1 domain-containing protein 3, mitochondrial from Homo sapiens (Human).